The sequence spans 418 residues: Glutamate dehydrogenase (418 aa).

The active site involves lysine 105. 217–223 (GYGNVGY) lines the NAD(+) pocket.

This sequence belongs to the Glu/Leu/Phe/Val dehydrogenases family. As to quaternary structure, homohexamer.

Its subcellular location is the cytoplasm. The catalysed reaction is L-glutamate + NAD(+) + H2O = 2-oxoglutarate + NH4(+) + NADH + H(+). It carries out the reaction L-glutamate + NADP(+) + H2O = 2-oxoglutarate + NH4(+) + NADPH + H(+). In Aeropyrum pernix (strain ATCC 700893 / DSM 11879 / JCM 9820 / NBRC 100138 / K1), this protein is Glutamate dehydrogenase (gdhA).